The sequence spans 99 residues: Cell division protein FtsB (99 aa).

Residues 1–3 (MKF) are Cytoplasmic-facing. The chain crosses the membrane as a helical span at residues 4 to 21 (FVIALIVLLGLLQYRLWS). The Periplasmic segment spans residues 22-99 (GDNSLPEYFV…GDRSVSSPSQ (78 aa)). A coiled-coil region spans residues 31–73 (VLQKQIAAQQDGNAKLNERNQVLKEEIIDLKSGTEAIEERARN).

Belongs to the FtsB family. As to quaternary structure, part of a complex composed of FtsB, FtsL and FtsQ.

Its subcellular location is the cell inner membrane. Essential cell division protein. May link together the upstream cell division proteins, which are predominantly cytoplasmic, with the downstream cell division proteins, which are predominantly periplasmic. The polypeptide is Cell division protein FtsB (Shewanella sp. (strain MR-4)).